The sequence spans 431 residues: Adenylosuccinate synthetase (431 aa).

GTP is bound by residues 12-18 and 40-42; these read GDEGKGK and GHT. Catalysis depends on Asp-13, which acts as the Proton acceptor. Mg(2+) contacts are provided by Asp-13 and Gly-40. Residues 13-16, 38-41, Thr-131, Arg-145, Gln-225, Thr-240, and Arg-304 each bind IMP; these read DEGK and NAGH. Residue His-41 is the Proton donor of the active site. 300–306 contributes to the substrate binding site; that stretch reads TTTGRKR. Residues Arg-306, 332–334, and 414–416 contribute to the GTP site; these read KLD and STS.

Belongs to the adenylosuccinate synthetase family. In terms of assembly, homodimer. Mg(2+) is required as a cofactor.

Its subcellular location is the cytoplasm. The catalysed reaction is IMP + L-aspartate + GTP = N(6)-(1,2-dicarboxyethyl)-AMP + GDP + phosphate + 2 H(+). It functions in the pathway purine metabolism; AMP biosynthesis via de novo pathway; AMP from IMP: step 1/2. Its function is as follows. Plays an important role in the de novo pathway of purine nucleotide biosynthesis. Catalyzes the first committed step in the biosynthesis of AMP from IMP. In Jannaschia sp. (strain CCS1), this protein is Adenylosuccinate synthetase.